The sequence spans 389 residues: Putative glutamate--cysteine ligase 2 (389 aa).

It belongs to the glutamate--cysteine ligase type 2 family. YbdK subfamily.

It catalyses the reaction L-cysteine + L-glutamate + ATP = gamma-L-glutamyl-L-cysteine + ADP + phosphate + H(+). Its function is as follows. ATP-dependent carboxylate-amine ligase which exhibits weak glutamate--cysteine ligase activity. This Rhodospirillum rubrum (strain ATCC 11170 / ATH 1.1.1 / DSM 467 / LMG 4362 / NCIMB 8255 / S1) protein is Putative glutamate--cysteine ligase 2.